The sequence spans 209 residues: Fibroblast growth factor 10 (209 aa).

A signal peptide spans 1–36; it reads MWKWILTHCASAFPHLPGCCCCFLLLFLVSSFPVTC. Residues Asn-50 and Asn-197 are each glycosylated (N-linked (GlcNAc...) asparagine).

This sequence belongs to the heparin-binding growth factors family. As to quaternary structure, interacts with FGFR1 and FGFR2. Interacts with FGFBP1. Expressed abundantly in embryos and the lung, and at much lower levels in brain and heart.

The protein localises to the secreted. Functionally, plays an important role in the regulation of embryonic development, cell proliferation and cell differentiation. Required for normal branching morphogenesis. May play a role in wound healing. This is Fibroblast growth factor 10 (Fgf10) from Mus musculus (Mouse).